The chain runs to 315 residues: Olfactory receptor 3A1 (315 aa).

Residues 1–28 (MQPESGANGTVIAEFILLGLLEAPGLQP) lie on the Extracellular side of the membrane. Asparagine 8 is a glycosylation site (N-linked (GlcNAc...) asparagine). Residues 29 to 52 (VVFVLFLFAYLVTVGGNLSILAAV) form a helical membrane-spanning segment. The Cytoplasmic portion of the chain corresponds to 53-60 (LVEPKLHS). Residues 61 to 82 (PMYFFLGNLSVLDVGCISVTVP) traverse the membrane as a helical segment. Residues 83-103 (SMLSRLLSRKRAVPCGACLTQ) lie on the Extracellular side of the membrane. A disulfide bridge connects residues cysteine 100 and cysteine 192. A helical membrane pass occupies residues 104–123 (LFFFHLFVGVDCFLLTAMAY). At 124-143 (DRFLAICRPLTYSTRMSQTV) the chain is on the cytoplasmic side. A helical membrane pass occupies residues 144 to 161 (QRMLVAASWACAFTNALT). Topologically, residues 162 to 199 (HTVAMSTLNFCGPNEVNHFYCDLPQLFQLSCSSTQLNE) are extracellular. The chain crosses the membrane as a helical span at residues 200 to 223 (LLLFAVGFIMAGTPMALIVISYIH). Topologically, residues 224–240 (VAAAVLRIRSVEGRKKA) are cytoplasmic. The chain crosses the membrane as a helical span at residues 241 to 264 (FSTCGSHLTVVAMFYGSGIFNYMR). The Extracellular segment spans residues 265–275 (LGSTKLSDKDK). The chain crosses the membrane as a helical span at residues 276–295 (AVGIFNTVINPMVNPIIYRF). Residues 296 to 315 (RNPEVQSAIWRMLTGRRSLA) lie on the Cytoplasmic side of the membrane.

It belongs to the G-protein coupled receptor 1 family.

It is found in the cell membrane. Odorant receptor. In Pan troglodytes (Chimpanzee), this protein is Olfactory receptor 3A1 (OR3A1).